Consider the following 408-residue polypeptide: Arginine biosynthesis bifunctional protein ArgJ (408 aa).

Substrate contacts are provided by threonine 156, lysine 182, threonine 193, glutamate 279, asparagine 403, and serine 408. Residue threonine 193 is the Nucleophile of the active site.

Belongs to the ArgJ family. Heterotetramer of two alpha and two beta chains.

It localises to the cytoplasm. It carries out the reaction N(2)-acetyl-L-ornithine + L-glutamate = N-acetyl-L-glutamate + L-ornithine. It catalyses the reaction L-glutamate + acetyl-CoA = N-acetyl-L-glutamate + CoA + H(+). The protein operates within amino-acid biosynthesis; L-arginine biosynthesis; L-ornithine and N-acetyl-L-glutamate from L-glutamate and N(2)-acetyl-L-ornithine (cyclic): step 1/1. Its pathway is amino-acid biosynthesis; L-arginine biosynthesis; N(2)-acetyl-L-ornithine from L-glutamate: step 1/4. Catalyzes two activities which are involved in the cyclic version of arginine biosynthesis: the synthesis of N-acetylglutamate from glutamate and acetyl-CoA as the acetyl donor, and of ornithine by transacetylation between N(2)-acetylornithine and glutamate. The chain is Arginine biosynthesis bifunctional protein ArgJ from Dechloromonas aromatica (strain RCB).